Here is a 427-residue protein sequence, read N- to C-terminus: 3-phosphoshikimate 1-carboxyvinyltransferase (427 aa).

Residues lysine 20, serine 21, and arginine 25 each coordinate 3-phosphoshikimate. Residue lysine 20 coordinates phosphoenolpyruvate. Residues glycine 92 and arginine 120 each coordinate phosphoenolpyruvate. The 3-phosphoshikimate site is built by serine 166, glutamine 168, aspartate 312, and lysine 339. Position 168 (glutamine 168) interacts with phosphoenolpyruvate. Aspartate 312 (proton acceptor) is an active-site residue. Arginine 343 and arginine 385 together coordinate phosphoenolpyruvate.

It belongs to the EPSP synthase family. As to quaternary structure, monomer.

It is found in the cytoplasm. The enzyme catalyses 3-phosphoshikimate + phosphoenolpyruvate = 5-O-(1-carboxyvinyl)-3-phosphoshikimate + phosphate. The protein operates within metabolic intermediate biosynthesis; chorismate biosynthesis; chorismate from D-erythrose 4-phosphate and phosphoenolpyruvate: step 6/7. Functionally, catalyzes the transfer of the enolpyruvyl moiety of phosphoenolpyruvate (PEP) to the 5-hydroxyl of shikimate-3-phosphate (S3P) to produce enolpyruvyl shikimate-3-phosphate and inorganic phosphate. The chain is 3-phosphoshikimate 1-carboxyvinyltransferase from Streptococcus equi subsp. equi (strain 4047).